The chain runs to 171 residues: Putative auxin-responsive protein IAA29 (171 aa).

The PB1 domain maps to 19 to 114 (SRFVKVFMHG…TVKKIYIVPA (96 aa)). The disordered stretch occupies residues 117–171 (QNENDYQEEEEDNAAAAATADEDGDGAAADDGVAAAADDVDDVAGYTSNDDPSFD). Residues 142–153 (GAAADDGVAAAA) show a composition bias toward low complexity. Over residues 162-171 (YTSNDDPSFD) the composition is skewed to polar residues.

Belongs to the Aux/IAA family. In terms of assembly, homodimers and heterodimers.

Its subcellular location is the nucleus. Its function is as follows. Aux/IAA proteins are short-lived transcriptional factors that function as repressors of early auxin response genes at low auxin concentrations. The sequence is that of Putative auxin-responsive protein IAA29 (IAA29) from Oryza sativa subsp. japonica (Rice).